The primary structure comprises 313 residues: Ankyrin repeat family A protein 2 (313 aa).

5 ANK repeats span residues 148–180 (ANSL…HTDE), 181–213 (EGFT…LLGK), 214–246 (GRES…EYDW), 247–279 (NGGT…IETD), and 280–313 (SGYN…NIKE).

As to quaternary structure, interacts (via ANK repeats) with CCDC8 (via PxLPxI/L motif); mediates the interaction with the 3M complex which is composed of CCDC8, CUL7 and OBSL1. Interacts (via ANK repeats) with HDAC4 (via PxLPxI/L motif). Interacts (via ANK repeats) with HDAC5 (via PxLPxI/L motif). Interacts (via ANK repeats) with LRP2/megalin (via PxLPxI/L motif). Interacts (via ANK repeats) with RFX7 (via PxLPxI/L motif). Interacts with AHRR. Interacts with NEK6.

It localises to the cytoplasm. Its subcellular location is the cytoskeleton. It is found in the membrane. Its function is as follows. May regulate the interaction between the 3M complex and the histone deacetylases HDAC4 and HDAC5. May also regulate LRP2/megalin. The polypeptide is Ankyrin repeat family A protein 2 (ANKRA2) (Bos taurus (Bovine)).